We begin with the raw amino-acid sequence, 582 residues long: Hemagglutinin-neuraminidase (582 aa).

The Intravirion segment spans residues 1–34; the sequence is MEPSKLFTMSDNATFAPGPVVNAADKKTFRTCFR. A helical transmembrane segment spans residues 35-55; it reads ILVLSVQAVTLILVIVTLGEL. At 56-582 the chain is on the virion surface side; it reads VRMINDQGLS…LPVLTRLTIT (527 aa). 3 disulfides stabilise this stretch: C178-C202, C192-C253, and C244-C257. Residues N284 and N329 are each glycosylated (N-linked (GlcNAc...) asparagine; by host). Disulfide bonds link C350-C471, C382-C392, and C465-C475. N-linked (GlcNAc...) asparagine; by host glycosylation is found at N400 and N448. N-linked (GlcNAc...) asparagine; by host glycosylation is present at N507. Cysteines 545 and 556 form a disulfide.

Belongs to the paramyxoviruses hemagglutinin-neuraminidase family. Homotetramer; composed of disulfide-linked homodimers. Interacts with F protein trimer.

It localises to the virion membrane. Its subcellular location is the host cell membrane. It catalyses the reaction Hydrolysis of alpha-(2-&gt;3)-, alpha-(2-&gt;6)-, alpha-(2-&gt;8)- glycosidic linkages of terminal sialic acid residues in oligosaccharides, glycoproteins, glycolipids, colominic acid and synthetic substrates.. Its function is as follows. Attaches the virus to alpha-2,3-linked sialic acid-containing cell receptors and thereby initiating infection. Binding of HN protein to the receptor induces a conformational change that allows the F protein to trigger virion/cell membranes fusion. Binds to the glycan motifs sialyl Lewis (SLe) and GM2 ganglioside (GM2-glycan). Neuraminidase activity ensures the efficient spread of the virus by dissociating the mature virions from the neuraminic acid containing glycoproteins. The sequence is that of Hemagglutinin-neuraminidase from Mumps orthorubulavirus (MuV).